The sequence spans 276 residues: MFRPQVVGVTGRTDLGRAVRVAERVCRLCDREGFEVLVDDSLGIGEYPRVNLKDMGKEVDMIITIGGDGTILRVSRITSEYEVPILGVNLGKFGFLTEVSESGLKEAVSRLARGDFNLEEHRKLRIKIGGSDEGDALNEVTVITSRPAKMIRYRLSIDGFELETTWADGVLVATPTGSTAYSLSAGGPIVEPQVECSIITPLNPFKLEARPMVVSMDRRVEIDVDDPERAEVVVDGQEYMNLDGTVSVTRSPNVARFIRFGSTYFERLKEKFLRWD.

The Proton acceptor role is filled by Asp-68. Residues 68 to 69 (DG), Arg-73, 138 to 139 (NE), Lys-149, Asp-168, 179 to 184 (TAYSLS), and Gln-237 each bind NAD(+).

It belongs to the NAD kinase family. Requires a divalent metal cation as cofactor.

It localises to the cytoplasm. It carries out the reaction NAD(+) + ATP = ADP + NADP(+) + H(+). In terms of biological role, involved in the regulation of the intracellular balance of NAD and NADP, and is a key enzyme in the biosynthesis of NADP. Catalyzes specifically the phosphorylation on 2'-hydroxyl of the adenosine moiety of NAD to yield NADP. This is NAD kinase from Methanopyrus kandleri (strain AV19 / DSM 6324 / JCM 9639 / NBRC 100938).